The primary structure comprises 293 residues: Glycine--tRNA ligase alpha subunit (293 aa).

This sequence belongs to the class-II aminoacyl-tRNA synthetase family. As to quaternary structure, tetramer of two alpha and two beta subunits.

The protein localises to the cytoplasm. The catalysed reaction is tRNA(Gly) + glycine + ATP = glycyl-tRNA(Gly) + AMP + diphosphate. The sequence is that of Glycine--tRNA ligase alpha subunit from Aliarcobacter butzleri (strain RM4018) (Arcobacter butzleri).